A 622-amino-acid polypeptide reads, in one-letter code: Probable potassium transport system protein Kup (622 aa).

Transmembrane regions (helical) follow at residues 8–28, 50–70, 103–123, 137–157, 168–188, 203–223, 247–267, 285–305, 337–357, 366–386, 393–413, and 419–439; these read LAAL…TSVL, ILSI…VVLV, LAVG…TPAI, PHFK…LFAV, FFGP…LAHI, ALGF…AVVL, WFGV…ALLL, ALIP…QALI, IYMP…VVMF, AYGI…FFVI, PLAL…AFFA, and LFQG…LMMT.

The protein belongs to the HAK/KUP transporter (TC 2.A.72) family.

The protein resides in the cell inner membrane. It catalyses the reaction K(+)(in) + H(+)(in) = K(+)(out) + H(+)(out). Its function is as follows. Transport of potassium into the cell. Likely operates as a K(+):H(+) symporter. The polypeptide is Probable potassium transport system protein Kup (Verminephrobacter eiseniae (strain EF01-2)).